We begin with the raw amino-acid sequence, 75 residues long: uncharacterized protein (75 aa).

This is an uncharacterized protein from Halalkalibacterium halodurans (strain ATCC BAA-125 / DSM 18197 / FERM 7344 / JCM 9153 / C-125) (Bacillus halodurans).